The primary structure comprises 136 residues: Calmodulin-A (136 aa).

EF-hand domains follow at residues Glu1 to Asn36, Pro37 to Asp72, Asp74 to Lys109, and Leu110 to Val136. Residues Asp14, Asp16, Asp18, Thr20, Glu25, Asp50, Asp52, Asn54, Thr56, Glu61, Asp87, Asp89, Asn91, Tyr93, and Glu98 each coordinate Ca(2+). Lys109 is modified (N6,N6,N6-trimethyllysine). Ca(2+)-binding residues include Asp123, Asp125, Asp127, Gln129, and Glu134.

This sequence belongs to the calmodulin family.

In terms of biological role, calmodulin acts as part of a calcium signal transduction pathway by mediating the control of a large number of enzymes, ion channels, aquaporins and other proteins through calcium-binding. Calcium-binding is required for the activation of calmodulin. Among the enzymes to be stimulated by the calmodulin-calcium complex are a number of protein kinases, such as myosin light-chain kinases and calmodulin-dependent protein kinase type II (CaMK2), and phosphatases. In Oryzias latipes (Japanese rice fish), this protein is Calmodulin-A (calm1).